A 407-amino-acid chain; its full sequence is Lysosome-associated membrane glycoprotein 1 (407 aa).

An N-terminal signal peptide occupies residues 1 to 21 (MAAPGAPRSLLLLLLAGLAHG). The interval 22–189 (ASALFVVKDS…SKEETRCTQD (168 aa)) is first lumenal domain. The Lumenal segment spans residues 22-371 (ASALFVVKDS…VEECMQDGNN (350 aa)). Asn-32, Asn-40, Asn-57, Asn-72, Asn-79, Asn-98, Asn-102, Asn-116, Asn-125, Asn-145, Asn-160, and Asn-178 each carry an N-linked (GlcNAc...) asparagine glycan. Cys-36 and Cys-75 form a disulfide bridge. Cys-150 and Cys-186 are disulfide-bonded. A disordered region spans residues 183–206 (ETRCTQDGPSPTTVPPSPSPPLVP). A hinge region spans residues 190 to 219 (GPSPTTVPPSPSPPLVPTNPTVIKYNVTGE). The span at 194–206 (TTVPPSPSPPLVP) shows a compositional bias: pro residues. 9 N-linked (GlcNAc...) asparagine glycosylation sites follow: Asn-215, Asn-220, Asn-233, Asn-241, Asn-253, Asn-283, Asn-297, Asn-304, and Asn-312. A second lumenal domain region spans residues 220–371 (NGTCLLASMA…VEECMQDGNN (152 aa)). Cys-223 and Cys-260 are oxidised to a cystine. The cysteines at positions 328 and 365 are disulfide-linked. The helical transmembrane segment at 372–395 (MLIPIAVGGALAGLVLIVLIAYLI) threads the bilayer. The Cytoplasmic portion of the chain corresponds to 396-407 (GRKRSHAGYQTI).

Belongs to the LAMP family. As to quaternary structure, interacts with ABCB9; this interaction strongly stabilizes ABCB9 and protects ABCB9 against lysosomal degradation. Interacts with FURIN. Interacts with TMEM175; inhibiting the proton channel activity of TMEM175. In terms of processing, O- and N-glycosylated; some of the N-glycans attached to LAMP-1 are polylactosaminoglycans.

Its subcellular location is the lysosome membrane. The protein resides in the endosome membrane. It localises to the late endosome membrane. It is found in the cell membrane. The protein localises to the cytolytic granule membrane. Functionally, lysosomal membrane glycoprotein which plays an important role in lysosome biogenesis, lysosomal pH regulation, autophagy and cholesterol homeostasis. Acts as an important regulator of lysosomal lumen pH regulation by acting as a direct inhibitor of the proton channel TMEM175, facilitating lysosomal acidification for optimal hydrolase activity. Also plays an important role in NK-cells cytotoxicity. Mechanistically, participates in cytotoxic granule movement to the cell surface and perforin trafficking to the lytic granule. In addition, protects NK-cells from degranulation-associated damage induced by their own cytotoxic granule content. Presents carbohydrate ligands to selectins. This chain is Lysosome-associated membrane glycoprotein 1 (LAMP1), found in Cricetulus griseus (Chinese hamster).